The primary structure comprises 136 residues: Nucleoside diphosphate kinase (136 aa).

ATP is bound by residues K10, F58, R86, T92, R104, and N114. The active-site Pros-phosphohistidine intermediate is H117.

It belongs to the NDK family. In terms of assembly, homotetramer. Mg(2+) serves as cofactor.

It localises to the cytoplasm. It catalyses the reaction a 2'-deoxyribonucleoside 5'-diphosphate + ATP = a 2'-deoxyribonucleoside 5'-triphosphate + ADP. The catalysed reaction is a ribonucleoside 5'-diphosphate + ATP = a ribonucleoside 5'-triphosphate + ADP. In terms of biological role, major role in the synthesis of nucleoside triphosphates other than ATP. The ATP gamma phosphate is transferred to the NDP beta phosphate via a ping-pong mechanism, using a phosphorylated active-site intermediate. This Corynebacterium efficiens (strain DSM 44549 / YS-314 / AJ 12310 / JCM 11189 / NBRC 100395) protein is Nucleoside diphosphate kinase.